Here is a 222-residue protein sequence, read N- to C-terminus: Cytidylate kinase (222 aa).

11 to 19 (GPTASGKGT) provides a ligand contact to ATP.

This sequence belongs to the cytidylate kinase family. Type 1 subfamily.

The protein resides in the cytoplasm. The enzyme catalyses CMP + ATP = CDP + ADP. It catalyses the reaction dCMP + ATP = dCDP + ADP. The protein is Cytidylate kinase of Cupriavidus necator (strain ATCC 17699 / DSM 428 / KCTC 22496 / NCIMB 10442 / H16 / Stanier 337) (Ralstonia eutropha).